We begin with the raw amino-acid sequence, 124 residues long: Probable 5-hydroxyisourate hydrolase (124 aa).

Residues His16, Arg57, and Tyr121 each contribute to the substrate site.

Belongs to the transthyretin family. 5-hydroxyisourate hydrolase subfamily. As to quaternary structure, homotetramer.

The catalysed reaction is 5-hydroxyisourate + H2O = 5-hydroxy-2-oxo-4-ureido-2,5-dihydro-1H-imidazole-5-carboxylate + H(+). Functionally, catalyzes the hydrolysis of 5-hydroxyisourate (HIU) to 2-oxo-4-hydroxy-4-carboxy-5-ureidoimidazoline (OHCU). The protein is Probable 5-hydroxyisourate hydrolase of Schizosaccharomyces pombe (strain 972 / ATCC 24843) (Fission yeast).